Consider the following 208-residue polypeptide: Orotidine 5'-phosphate decarboxylase (208 aa).

Substrate contacts are provided by residues Asp7, Lys29, 57–66 (DLKLADIPNT), Ser109, 162–172 (PGIGAQGGKAK), Gly185, and Arg186. Lys59 serves as the catalytic Proton donor.

It belongs to the OMP decarboxylase family. Type 1 subfamily. As to quaternary structure, homodimer.

It carries out the reaction orotidine 5'-phosphate + H(+) = UMP + CO2. Its pathway is pyrimidine metabolism; UMP biosynthesis via de novo pathway; UMP from orotate: step 2/2. Its function is as follows. Catalyzes the decarboxylation of orotidine 5'-monophosphate (OMP) to uridine 5'-monophosphate (UMP). In Pyrococcus horikoshii (strain ATCC 700860 / DSM 12428 / JCM 9974 / NBRC 100139 / OT-3), this protein is Orotidine 5'-phosphate decarboxylase (pyrF).